A 360-amino-acid polypeptide reads, in one-letter code: MKPSMRSRLEQLAHRLIEVDALLAEPETAADMDRFRKLSRERAELEPVVEAFNAFLGVEADVATAQEMLSDPDMKAMAEDEIKTGRARIEEMEAALQLLLLPRDPDDGRSLFLEIRAGTGGDESALFSGDLLRMYTRYAETRGWRVEIMSESESELGGYKEVIVRIDGDGAYGRLKFESGAHRVQRVPATEAQGRIHTSACTVAVMPEADAMSDIVINPSDLRIDTFRASGAGGQHINKTDSAVRITHVPTGLVVECQDDRSQHRNKDKAMQVLAARLKDKEMRERQSKEAAERKSLIGSGDRSERIRTYNYPQGRVTDHRINLTLYKLQQIMEGDLDELTGALLAEHQAEQLAALGHDL.

At Q235 the chain carries N5-methylglutamine.

This sequence belongs to the prokaryotic/mitochondrial release factor family. In terms of processing, methylated by PrmC. Methylation increases the termination efficiency of RF1.

Its subcellular location is the cytoplasm. Its function is as follows. Peptide chain release factor 1 directs the termination of translation in response to the peptide chain termination codons UAG and UAA. This chain is Peptide chain release factor 1, found in Bordetella parapertussis (strain 12822 / ATCC BAA-587 / NCTC 13253).